A 291-amino-acid polypeptide reads, in one-letter code: Cilia- and flagella-associated protein 298 (291 aa).

Belongs to the CFAP298 family.

In Drosophila melanogaster (Fruit fly), this protein is Cilia- and flagella-associated protein 298.